Reading from the N-terminus, the 591-residue chain is Aspartate--tRNA(Asp/Asn) ligase (591 aa).

Glu-176 serves as a coordination point for L-aspartate. The tract at residues 200–203 (QLFK) is aspartate. An L-aspartate-binding site is contributed by Arg-222. Residues 222 to 224 (RDE) and Gln-231 contribute to the ATP site. His-450 is a binding site for L-aspartate. Glu-484 serves as a coordination point for ATP. Residue Arg-491 participates in L-aspartate binding. Position 536–539 (536–539 (GLDR)) interacts with ATP.

This sequence belongs to the class-II aminoacyl-tRNA synthetase family. Type 1 subfamily. In terms of assembly, homodimer.

Its subcellular location is the cytoplasm. The catalysed reaction is tRNA(Asx) + L-aspartate + ATP = L-aspartyl-tRNA(Asx) + AMP + diphosphate. Aspartyl-tRNA synthetase with relaxed tRNA specificity since it is able to aspartylate not only its cognate tRNA(Asp) but also tRNA(Asn). Reaction proceeds in two steps: L-aspartate is first activated by ATP to form Asp-AMP and then transferred to the acceptor end of tRNA(Asp/Asn). This chain is Aspartate--tRNA(Asp/Asn) ligase, found in Bacillus cereus (strain B4264).